The sequence spans 154 residues: METLKSENKKRVLPSWMTAPVDEKRELSVKTPKRKKIAAGQVGLATRAPVMKTVYCMNEAEMVDVALGILIEGRKQEEPTLVAPDKPQPSPPYSASPHTSSPGSSSEKEDSGNRWPALGLSPSHGPEAADSPCSRSPEEEEEDALKYVREIFFS.

At methionine 1 the chain carries N-acetylmethionine. Positions 1–21 (METLKSENKKRVLPSWMTAPV) match the KBM motif. Positions 77-144 (EEPTLVAPDK…RSPEEEEEDA (68 aa)) are disordered. The span at 95 to 105 (ASPHTSSPGSS) shows a compositional bias: low complexity. The short motif at 144 to 154 (ALKYVREIFFS) is the XLM element.

In terms of assembly, interacts (via KBM motif) with XRCC5/Ku80 and XRCC6/Ku70 heterodimer. Interacts (via XLF motif) with TRIM28/KAP1, ATM, MRE11, NBN and RAD50. Interacts with splicing factor SF3B1. Interacts with ERCC6L2; this interaction is DNA independent.

Its subcellular location is the cytoplasm. It localises to the nucleus. The protein resides in the chromosome. Functionally, cell-cycle-specific regulator of classical non-homologous end joining (NHEJ) of DNA double-strand break (DSB) repair, which can act both as an activator or inhibitor of NHEJ, depending on the cell cycle phase. Acts as a regulator of DNA repair pathway choice by specifically inhibiting classical NHEJ during the S and G2 phases, thereby promoting error-free repair by homologous recombination during cell cycle phases when sister chromatids are present. Preferentially protects single-stranded overhangs at break sites by inhibiting classical NHEJ, thereby creating a local environment that favors homologous recombination. Acts via interaction with XRCC5/Ku80 and XRCC6/Ku70. In contrast, acts as an activator of NHEJ during G1 phase of the cell cycle: promotes classical NHEJ in G1 phase cells via multivalent interactions that increase the affinity of DNA damage response proteins for DSB-associated chromatin. Also involved in immunoglobulin V(D)J recombination. May act as a regulator of proteasome. In case of infection by a retrovirus, may regulate the proteasome during the uncoating phase of retrovirus. This Cricetulus griseus (Chinese hamster) protein is Cell cycle regulator of non-homologous end joining.